The following is a 60-amino-acid chain: Large ribosomal subunit protein uL30 (60 aa).

Belongs to the universal ribosomal protein uL30 family. Part of the 50S ribosomal subunit.

This Baumannia cicadellinicola subsp. Homalodisca coagulata protein is Large ribosomal subunit protein uL30.